The sequence spans 493 residues: Glutamyl-tRNA(Gln) amidotransferase subunit A (493 aa).

Active-site charge relay system residues include lysine 81 and serine 156. Serine 180 acts as the Acyl-ester intermediate in catalysis.

Belongs to the amidase family. GatA subfamily. As to quaternary structure, heterotrimer of A, B and C subunits.

It carries out the reaction L-glutamyl-tRNA(Gln) + L-glutamine + ATP + H2O = L-glutaminyl-tRNA(Gln) + L-glutamate + ADP + phosphate + H(+). In terms of biological role, allows the formation of correctly charged Gln-tRNA(Gln) through the transamidation of misacylated Glu-tRNA(Gln) in organisms which lack glutaminyl-tRNA synthetase. The reaction takes place in the presence of glutamine and ATP through an activated gamma-phospho-Glu-tRNA(Gln). The protein is Glutamyl-tRNA(Gln) amidotransferase subunit A of Mycobacterium avium (strain 104).